Consider the following 795-residue polypeptide: Phenylalanine--tRNA ligase beta subunit (795 aa).

One can recognise a tRNA-binding domain in the interval 39 to 148 (AGSFHGVVVG…ADAPIGTDIR (110 aa)). In terms of domain architecture, B5 spans 401-476 (PKRATITLRR…RVYGYNNIPD (76 aa)). Residues aspartate 454, aspartate 460, glutamate 463, and glutamate 464 each coordinate Mg(2+). The 94-residue stretch at 701-794 (SRFPANRRDI…LKERFQASLR (94 aa)) folds into the FDX-ACB domain.

This sequence belongs to the phenylalanyl-tRNA synthetase beta subunit family. Type 1 subfamily. Tetramer of two alpha and two beta subunits. The cofactor is Mg(2+).

It is found in the cytoplasm. It catalyses the reaction tRNA(Phe) + L-phenylalanine + ATP = L-phenylalanyl-tRNA(Phe) + AMP + diphosphate + H(+). This chain is Phenylalanine--tRNA ligase beta subunit, found in Shigella boydii serotype 4 (strain Sb227).